A 259-amino-acid polypeptide reads, in one-letter code: Proteasome subunit alpha (259 aa).

Positions 233–243 (PAAPAAASESA) are enriched in low complexity. The tract at residues 233–259 (PAAPAAASESAPEPKPDTETKPADPQD) is disordered. The span at 244 to 259 (PEPKPDTETKPADPQD) shows a compositional bias: basic and acidic residues.

Belongs to the peptidase T1A family. As to quaternary structure, the 20S proteasome core is composed of 14 alpha and 14 beta subunits that assemble into four stacked heptameric rings, resulting in a barrel-shaped structure. The two inner rings, each composed of seven catalytic beta subunits, are sandwiched by two outer rings, each composed of seven alpha subunits. The catalytic chamber with the active sites is on the inside of the barrel. Has a gated structure, the ends of the cylinder being occluded by the N-termini of the alpha-subunits. Is capped by the proteasome-associated ATPase, ARC.

It is found in the cytoplasm. It participates in protein degradation; proteasomal Pup-dependent pathway. With respect to regulation, the formation of the proteasomal ATPase ARC-20S proteasome complex, likely via the docking of the C-termini of ARC into the intersubunit pockets in the alpha-rings, may trigger opening of the gate for substrate entry. Interconversion between the open-gate and close-gate conformations leads to a dynamic regulation of the 20S proteasome proteolysis activity. Its function is as follows. Component of the proteasome core, a large protease complex with broad specificity involved in protein degradation. This Rhodococcus opacus (strain B4) protein is Proteasome subunit alpha.